A 430-amino-acid chain; its full sequence is Aspartate aminotransferase, mitochondrial (430 aa).

A mitochondrion-targeting transit peptide spans 1–29 (MALLHSARVLSGVASAFHPGLAAAASARA). Thr48 carries the post-translational modification Phosphothreonine. An N6-acetyllysine modification is found at Lys59. Residue Gly65 participates in substrate binding. Lys73 carries the N6-acetyllysine; alternate modification. Lys73 carries the post-translational modification N6-succinyllysine; alternate. Lys82 bears the N6-acetyllysine mark. Lys90 carries the N6-acetyllysine; alternate modification. At Lys90 the chain carries N6-succinyllysine; alternate. Tyr96 carries the 3'-nitrotyrosine; alternate modification. Residue Tyr96 is modified to Phosphotyrosine; alternate. N6-acetyllysine; alternate is present on Lys122. The residue at position 122 (Lys122) is an N6-succinyllysine; alternate. Ser143 carries the phosphoserine modification. Lys159 is subject to N6-acetyllysine; alternate. N6-succinyllysine; alternate is present on Lys159. Position 162 (Trp162) interacts with substrate. Lys185 bears the N6-acetyllysine; alternate mark. Residue Lys185 is modified to N6-succinyllysine; alternate. Asn215 is a binding site for substrate. The residue at position 227 (Lys227) is an N6-succinyllysine. Lys234 carries the N6-acetyllysine modification. Lys279 and Lys296 each carry N6-acetyllysine; alternate. Lys279 is modified (N6-(pyridoxal phosphate)lysine; alternate). Lys296 is modified (N6-succinyllysine; alternate). Lys302 is modified (N6-acetyllysine). Lys309 bears the N6-acetyllysine; alternate mark. At Lys309 the chain carries N6-succinyllysine; alternate. Arg313 carries the asymmetric dimethylarginine modification. Lys338 is subject to N6-acetyllysine; alternate. Position 338 is an N6-succinyllysine; alternate (Lys338). N6-acetyllysine is present on Lys345. Lys363 is modified (N6-acetyllysine; alternate). Lys363 is subject to N6-succinyllysine; alternate. Lys364 and Lys387 each carry N6-acetyllysine. N6-acetyllysine; alternate is present on residues Lys396 and Lys404. Lys396 and Lys404 each carry N6-succinyllysine; alternate. Arg407 contacts substrate.

It belongs to the class-I pyridoxal-phosphate-dependent aminotransferase family. Homodimer. The cofactor is pyridoxal 5'-phosphate.

It is found in the mitochondrion matrix. It localises to the cell membrane. It carries out the reaction L-aspartate + 2-oxoglutarate = oxaloacetate + L-glutamate. The enzyme catalyses L-kynurenine + 2-oxoglutarate = kynurenate + L-glutamate + H2O. Its function is as follows. Catalyzes the irreversible transamination of the L-tryptophan metabolite L-kynurenine to form kynurenic acid (KA). As a member of the malate-aspartate shuttle, it has a key role in the intracellular NAD(H) redox balance. Is important for metabolite exchange between mitochondria and cytosol, and for amino acid metabolism. Facilitates cellular uptake of long-chain free fatty acids. In Oryctolagus cuniculus (Rabbit), this protein is Aspartate aminotransferase, mitochondrial (GOT2).